The primary structure comprises 338 residues: Tagatose 1,6-diphosphate aldolase (338 aa).

This sequence belongs to the aldolase LacD family.

The enzyme catalyses D-tagatofuranose 1,6-bisphosphate = D-glyceraldehyde 3-phosphate + dihydroxyacetone phosphate. The protein operates within carbohydrate metabolism; D-tagatose 6-phosphate degradation; D-glyceraldehyde 3-phosphate and glycerone phosphate from D-tagatose 6-phosphate: step 2/2. The protein is Tagatose 1,6-diphosphate aldolase of Listeria innocua serovar 6a (strain ATCC BAA-680 / CLIP 11262).